Reading from the N-terminus, the 393-residue chain is Methylthioribose kinase (393 aa).

ATP contacts are provided by residues Asn38, Lys53, and 107-109 (EDL). Asp225 contacts substrate. Position 242–244 (242–244 (DPE)) interacts with ATP. Arg332 serves as a coordination point for substrate.

Belongs to the methylthioribose kinase family. Homodimer.

The catalysed reaction is 5-(methylsulfanyl)-D-ribose + ATP = 5-(methylsulfanyl)-alpha-D-ribose 1-phosphate + ADP + H(+). It participates in amino-acid biosynthesis; L-methionine biosynthesis via salvage pathway; S-methyl-5-thio-alpha-D-ribose 1-phosphate from S-methyl-5'-thioadenosine (hydrolase route): step 2/2. In terms of biological role, catalyzes the phosphorylation of methylthioribose into methylthioribose-1-phosphate. This Bacillus cereus (strain B4264) protein is Methylthioribose kinase.